A 302-amino-acid polypeptide reads, in one-letter code: MDQQRLTHLKQLEAESIHIIREVAAEFDNPVMMYSIGKDSSVMLHLARKAFYPGKIPFPLLHVDTDWKFREMIEFRDRTAEKYGFELLVHKNPEGLAMGCSPFTHGSSKHTDIMKTQGLKQALNKYGFDAAFGGARRDEEKSRAKERVYSFRDKNHTWDPKNQRPELWKTYNGQVNKGESIRVFPLSNWTELDIWQYIYLENIEIVPLYLAAKRPVVERDGMLIMVDDDRMKLKEGEVIEEKSVRFRTLGCYPLTGAIESEANTLTGIIEEMLVATSSERQGRAIDHDQSGSMELKKRQGYF.

The disordered stretch occupies residues 280 to 302 (RQGRAIDHDQSGSMELKKRQGYF).

It belongs to the PAPS reductase family. CysD subfamily. In terms of assembly, heterodimer composed of CysD, the smaller subunit, and CysN.

The catalysed reaction is sulfate + ATP + H(+) = adenosine 5'-phosphosulfate + diphosphate. Its pathway is sulfur metabolism; hydrogen sulfide biosynthesis; sulfite from sulfate: step 1/3. Its function is as follows. With CysN forms the ATP sulfurylase (ATPS) that catalyzes the adenylation of sulfate producing adenosine 5'-phosphosulfate (APS) and diphosphate, the first enzymatic step in sulfur assimilation pathway. APS synthesis involves the formation of a high-energy phosphoric-sulfuric acid anhydride bond driven by GTP hydrolysis by CysN coupled to ATP hydrolysis by CysD. The sequence is that of Sulfate adenylyltransferase subunit 2 from Vibrio vulnificus (strain CMCP6).